The primary structure comprises 238 residues: MQHSKNYRKAAAAIDRSKLYTPAEAVKLAKETTSVKFDATVEVAMRLGVDPRKADQMVRGTVNLPHGTGKTARVIVFAAGAKAEEAVAAGADEVGTDELVARIQGGWLDFDAAIATPDQMAKIGRIARILGPRGLMPNPKTGTVTMNVTKAVADIKGGKIAFRVDKHSNLHLIIGKASFSESQLVDNYAAVLDEILRAKPSAAKGKYLRKVTLTTTMGPGVPIDPNVVKNLRENSAEG.

It belongs to the universal ribosomal protein uL1 family. As to quaternary structure, part of the 50S ribosomal subunit.

Its function is as follows. Binds directly to 23S rRNA. The L1 stalk is quite mobile in the ribosome, and is involved in E site tRNA release. Functionally, protein L1 is also a translational repressor protein, it controls the translation of the L11 operon by binding to its mRNA. This is Large ribosomal subunit protein uL1 from Salinispora tropica (strain ATCC BAA-916 / DSM 44818 / JCM 13857 / NBRC 105044 / CNB-440).